Reading from the N-terminus, the 180-residue chain is Large ribosomal subunit protein uL6 (180 aa).

The protein belongs to the universal ribosomal protein uL6 family. As to quaternary structure, part of the 50S ribosomal subunit.

Functionally, this protein binds to the 23S rRNA, and is important in its secondary structure. It is located near the subunit interface in the base of the L7/L12 stalk, and near the tRNA binding site of the peptidyltransferase center. In Clostridium botulinum (strain Eklund 17B / Type B), this protein is Large ribosomal subunit protein uL6.